Here is a 517-residue protein sequence, read N- to C-terminus: GMP synthase [glutamine-hydrolyzing] (517 aa).

The 191-residue stretch at Arg-9–Leu-199 folds into the Glutamine amidotransferase type-1 domain. Cys-86 (nucleophile) is an active-site residue. Residues His-173 and Glu-175 contribute to the active site. The region spanning Trp-200 to Arg-392 is the GMPS ATP-PPase domain. Ser-227 to Ser-233 provides a ligand contact to ATP.

Homodimer.

The catalysed reaction is XMP + L-glutamine + ATP + H2O = GMP + L-glutamate + AMP + diphosphate + 2 H(+). The protein operates within purine metabolism; GMP biosynthesis; GMP from XMP (L-Gln route): step 1/1. Catalyzes the synthesis of GMP from XMP. The protein is GMP synthase [glutamine-hydrolyzing] of Aliivibrio salmonicida (strain LFI1238) (Vibrio salmonicida (strain LFI1238)).